Reading from the N-terminus, the 331-residue chain is Lactamase-like protein nscB (331 aa).

Zn(2+) is bound by residues His-106, His-108, Asp-110, and His-111. The active-site Proton donor/acceptor is the Asp-110.

This sequence belongs to the metallo-beta-lactamase superfamily. It depends on Zn(2+) as a cofactor.

Its pathway is secondary metabolite biosynthesis. Lactamase-like protein; part of the gene cluster that mediates the biosynthesis of neosartoricin B, a prenylated anthracenone that probably exhibits T-cell antiproliferative activity, suggestive of a physiological role as an immunosuppressive agent. The non-reducing polyketide synthase nscA probably synthesizes and cyclizes the decaketide backbone. The hydrolase nscB then mediates the product release through hydrolysis followed by spontaneous decarboxylation. The prenyltransferase nscD catalyzes the addition of the dimethylallyl group to the aromatic C5. The FAD-dependent monooxygenase nscC is then responsible for the stereospecific hydroxylation at C2. Neosartoricin B can be converted into two additional compounds neosartoricins C and D. Neosartoricin C is a spirocyclic compound that is cyclized through the attack of C3 hydroxyl on C14, followed by dehydration. On the other hand, neosartoricin D is a further cyclized compound in which attack of C2 on C14 in neosartoricin C results in the formation of the acetal-containing dioxabicyclo-octanone ring. Both of these compounds are novel and possibly represent related metabolites of the gene cluster. This Trichophyton equinum (strain ATCC MYA-4606 / CBS 127.97) (Horse ringworm fungus) protein is Lactamase-like protein nscB.